The following is a 306-amino-acid chain: Curved DNA-binding protein (306 aa).

The 65-residue stretch at 5–69 folds into the J domain; the sequence is DYYAIMGVKP…QRRAEYDQMW (65 aa).

Its subcellular location is the cytoplasm. It localises to the nucleoid. Its function is as follows. DNA-binding protein that preferentially recognizes a curved DNA sequence. It is probably a functional analog of DnaJ; displays overlapping activities with DnaJ, but functions under different conditions, probably acting as a molecular chaperone in an adaptive response to environmental stresses other than heat shock. Lacks autonomous chaperone activity; binds native substrates and targets them for recognition by DnaK. Its activity is inhibited by the binding of CbpM. The polypeptide is Curved DNA-binding protein (Escherichia coli (strain 55989 / EAEC)).